We begin with the raw amino-acid sequence, 631 residues long: ATP-dependent RNA helicase mrh4, mitochondrial (631 aa).

Residues 1–45 constitute a mitochondrion transit peptide; the sequence is MNRLGRLPLPLPPSVCLFCQSRATTPLPPSLQATRSMATARLRRR. The segment at 68–111 is disordered; it reads KERFGPFAGMNQTEARIRDKPRTRSRAAQKRSGEPEEDSQKESP. The segment covering 98 to 108 has biased composition (basic and acidic residues); the sequence is RSGEPEEDSQK. The short motif at 141–174 is the Q motif element; it reads TSFDQFQLLPVVRNSISSQALPGLVDVTPTPIQR. The span at 180–193 shows a compositional bias: basic and acidic residues; that stretch reads LLEEPKTEKKPTKA. The disordered stretch occupies residues 180-199; the sequence is LLEEPKTEKKPTKADDDEPQ. A Helicase ATP-binding domain is found at 194-406; the sequence is DDDEPQYDQY…RKRYPDIKRL (213 aa). Position 207-214 (207-214) interacts with ATP; it reads AETGSGKT. The tract at residues 229-249 is disordered; the sequence is EARDKELEKKEQEEKAREREE. Residues 353 to 356 carry the DEAD box motif; sequence DEAD. One can recognise a Helicase C-terminal domain in the interval 455–631; sequence GPYASYVAPK…EGMFRGQALI (177 aa).

Belongs to the DEAD box helicase family. MRH4 subfamily.

It localises to the mitochondrion. The enzyme catalyses ATP + H2O = ADP + phosphate + H(+). In terms of biological role, ATP-binding RNA helicase involved in mitochondrial RNA metabolism. Required for maintenance of mitochondrial DNA. The protein is ATP-dependent RNA helicase mrh4, mitochondrial (mrh4) of Neosartorya fischeri (strain ATCC 1020 / DSM 3700 / CBS 544.65 / FGSC A1164 / JCM 1740 / NRRL 181 / WB 181) (Aspergillus fischerianus).